A 201-amino-acid polypeptide reads, in one-letter code: Small ribosomal subunit protein uS4c (201 aa).

In terms of domain architecture, S4 RNA-binding spans 89–152 (MRLDNILFRL…NSRTLVQNLL (64 aa)).

This sequence belongs to the universal ribosomal protein uS4 family. As to quaternary structure, part of the 30S ribosomal subunit. Contacts protein S5. The interaction surface between S4 and S5 is involved in control of translational fidelity.

It localises to the plastid. The protein localises to the chloroplast. In terms of biological role, one of the primary rRNA binding proteins, it binds directly to 16S rRNA where it nucleates assembly of the body of the 30S subunit. Its function is as follows. With S5 and S12 plays an important role in translational accuracy. The sequence is that of Small ribosomal subunit protein uS4c (rps4) from Capsella bursa-pastoris (Shepherd's purse).